Here is a 723-residue protein sequence, read N- to C-terminus: Lim and transglutaminase domain protein ltd-1 (723 aa).

The region spanning 5–72 is the LIM zinc-binding domain; it reads QHCNRCGKQV…SNHVPIAGPH (68 aa).

Belongs to the transglutaminase-like superfamily. Expressed in the Y and U rectal epithelial cells, in marginal cells of the terminal bulb and isthmus of the pharynx (at protein level).

The protein resides in the cytoplasm. It is found in the cytoskeleton. Cytoskeleton-associated protein. May play a role in hypodermal cell development. The polypeptide is Lim and transglutaminase domain protein ltd-1 (Caenorhabditis elegans).